The chain runs to 709 residues: Polyribonucleotide nucleotidyltransferase (709 aa).

Positions 486 and 492 each coordinate Mg(2+). A KH domain is found at 553–612; the sequence is PRIHTIKINPDKIKDVIGKGGSVIRALTEETGTTIEIEDDGTVKIAATDGEKAKHAISRI. Residues 622-690 form the S1 motif domain; it reads ARIYTGKVTR…RQGRVRLSIK (69 aa).

Belongs to the polyribonucleotide nucleotidyltransferase family. Component of the RNA degradosome, which is a multiprotein complex involved in RNA processing and mRNA degradation. Requires Mg(2+) as cofactor.

It is found in the cytoplasm. The catalysed reaction is RNA(n+1) + phosphate = RNA(n) + a ribonucleoside 5'-diphosphate. Involved in mRNA degradation. Catalyzes the phosphorolysis of single-stranded polyribonucleotides processively in the 3'- to 5'-direction. This chain is Polyribonucleotide nucleotidyltransferase, found in Photorhabdus laumondii subsp. laumondii (strain DSM 15139 / CIP 105565 / TT01) (Photorhabdus luminescens subsp. laumondii).